The primary structure comprises 312 residues: E3 ubiquitin-protein ligase RNF126-B (312 aa).

The Zn(2+) site is built by C13, C16, C29, and C32. The C4-type zinc-finger motif lies at 13–32 (CHSCTAEITPRLPEYTCPRC). Disordered stretches follow at residues 41–63 (PETSRNSESNSSNNSGTDQNRPS) and 96–139 (GTSG…RNEG). Residues 44 to 55 (SRNSESNSSNNS) are compositionally biased toward low complexity. A compositionally biased stretch (basic and acidic residues) spans 102–115 (EETRDGESRREHQS). The segment covering 124–134 (PRARMSTRRGA) has biased composition (basic residues). The RING-type zinc-finger motif lies at 228-269 (CPVCKEDYTVGESVRQLPCNHLFHNDCIIPWLEQHDTCPVCR). The tract at residues 275-312 (QNTATNPPGLTDMTFSSSSTSSSSSTSPTDENNTANNS) is disordered. The span at 290–301 (SSSSTSSSSSTS) shows a compositional bias: low complexity. The span at 302-312 (PTDENNTANNS) shows a compositional bias: polar residues.

It is found in the cytoplasm. Its subcellular location is the nucleus. It catalyses the reaction S-ubiquitinyl-[E2 ubiquitin-conjugating enzyme]-L-cysteine + [acceptor protein]-L-lysine = [E2 ubiquitin-conjugating enzyme]-L-cysteine + N(6)-ubiquitinyl-[acceptor protein]-L-lysine.. Its pathway is protein modification; protein ubiquitination. In terms of biological role, E3 ubiquitin-protein ligase that mediates ubiquitination oF target proteins. Depending on the associated E2 ligase, mediates 'Lys-27'-, 'Lys-29'-, 'Lys-48'- and/or 'Lys-63'-linked polyubiquitination of substrates. Part of a BAG6-dependent quality control process ensuring that proteins of the secretory pathway that are mislocalized to the cytosol are degraded by the proteasome. Probably acts by providing the ubiquitin ligase activity associated with the BAG6 complex and be responsible for ubiquitination of the hydrophobic mislocalized proteins and their targeting to the proteasome. The chain is E3 ubiquitin-protein ligase RNF126-B from Xenopus laevis (African clawed frog).